Reading from the N-terminus, the 203-residue chain is Histidine biosynthesis bifunctional protein HisIE (203 aa).

The segment at M1 to F114 is phosphoribosyl-AMP cyclohydrolase. The interval L115–Q203 is phosphoribosyl-ATP pyrophosphohydrolase.

The protein in the N-terminal section; belongs to the PRA-CH family. In the C-terminal section; belongs to the PRA-PH family.

It localises to the cytoplasm. It carries out the reaction 1-(5-phospho-beta-D-ribosyl)-ATP + H2O = 1-(5-phospho-beta-D-ribosyl)-5'-AMP + diphosphate + H(+). The catalysed reaction is 1-(5-phospho-beta-D-ribosyl)-5'-AMP + H2O = 1-(5-phospho-beta-D-ribosyl)-5-[(5-phospho-beta-D-ribosylamino)methylideneamino]imidazole-4-carboxamide. The protein operates within amino-acid biosynthesis; L-histidine biosynthesis; L-histidine from 5-phospho-alpha-D-ribose 1-diphosphate: step 2/9. Its pathway is amino-acid biosynthesis; L-histidine biosynthesis; L-histidine from 5-phospho-alpha-D-ribose 1-diphosphate: step 3/9. The polypeptide is Histidine biosynthesis bifunctional protein HisIE (hisI) (Salmonella typhi).